The following is a 152-amino-acid chain: 6,7-dimethyl-8-ribityllumazine synthase (152 aa).

Residues Phe24, 56–58, and 80–82 each bind 5-amino-6-(D-ribitylamino)uracil; these read SFE and VVV. A (2S)-2-hydroxy-3-oxobutyl phosphate-binding site is contributed by 85–86; that stretch reads ET. His88 acts as the Proton donor in catalysis. A 5-amino-6-(D-ribitylamino)uracil-binding site is contributed by Phe113. Arg127 contributes to the (2S)-2-hydroxy-3-oxobutyl phosphate binding site.

This sequence belongs to the DMRL synthase family.

The catalysed reaction is (2S)-2-hydroxy-3-oxobutyl phosphate + 5-amino-6-(D-ribitylamino)uracil = 6,7-dimethyl-8-(1-D-ribityl)lumazine + phosphate + 2 H2O + H(+). The protein operates within cofactor biosynthesis; riboflavin biosynthesis; riboflavin from 2-hydroxy-3-oxobutyl phosphate and 5-amino-6-(D-ribitylamino)uracil: step 1/2. Its function is as follows. Catalyzes the formation of 6,7-dimethyl-8-ribityllumazine by condensation of 5-amino-6-(D-ribitylamino)uracil with 3,4-dihydroxy-2-butanone 4-phosphate. This is the penultimate step in the biosynthesis of riboflavin. This is 6,7-dimethyl-8-ribityllumazine synthase from Thermococcus onnurineus (strain NA1).